Reading from the N-terminus, the 239-residue chain is MADS-box transcription factor 34 (239 aa).

An MADS-box domain is found at 1–61 (MGRGKVVLQR…GRLYQFSSSS (61 aa)). The K-box domain maps to 88–178 (MQNNYQEYVN…KRKLDEIDVE (91 aa)). A disordered region spans residues 179–208 (AAPPQPPWNGNCSNGHGGGGGVFSSEPPQP).

Highly expressed in leaves and at low levels in roots and spikelets (rice flower).

It localises to the nucleus. Probable transcription factor. The sequence is that of MADS-box transcription factor 34 (MADS34) from Oryza sativa subsp. japonica (Rice).